The chain runs to 197 residues: dITP/XTP pyrophosphatase (197 aa).

8–13 contacts substrate; the sequence is TGNQGK. Residue Asp69 is the Proton acceptor of the active site. Asp69 contacts Mg(2+). Substrate-binding positions include Ser70, 154–157, Lys177, and 182–183; these read FGYD and HR.

It belongs to the HAM1 NTPase family. As to quaternary structure, homodimer. Mg(2+) is required as a cofactor.

The enzyme catalyses XTP + H2O = XMP + diphosphate + H(+). It carries out the reaction dITP + H2O = dIMP + diphosphate + H(+). The catalysed reaction is ITP + H2O = IMP + diphosphate + H(+). Its function is as follows. Pyrophosphatase that catalyzes the hydrolysis of nucleoside triphosphates to their monophosphate derivatives, with a high preference for the non-canonical purine nucleotides XTP (xanthosine triphosphate), dITP (deoxyinosine triphosphate) and ITP. Seems to function as a house-cleaning enzyme that removes non-canonical purine nucleotides from the nucleotide pool, thus preventing their incorporation into DNA/RNA and avoiding chromosomal lesions. The polypeptide is dITP/XTP pyrophosphatase (Photobacterium profundum (strain SS9)).